We begin with the raw amino-acid sequence, 1358 residues long: MSSSRYILIPPEDLHPLTSNTGNEQNIYPDFDPWAHTEIEDKILLSFVAKGHYTSAKVNFESISARSSLQESLPKVAGMLAEQFSKVVHLREQTINKVSGESEESIRGKAKFTDLAGPGFSLPNRVTLTDQRRTQWLQELSSPNVSLSKLAKSIPHGFKRKQILEQCYMRQLPLQRAIWLIKSSYSIEWKSLTSKLKPGQTNEGVVSQLYNLWTNSMVSIMERLLFEMPKYYNDTAQAKIWKPRVSYYINLLGNCYNMGLMDRGVFNHWLVEFVEKVENFEFLPLSLHLLNIFWSGICPPTHGIEAPDNSFLISKITVVLLHKHHMILQNKSMINDENYIINDLQRNARLKESLLLRLKAFILDIFHHQSLEAFIMPNQNWDLYKNCLYEIVTMDKTSNEQAMVIKRKLELITYRNDSLQFNLLKQYKMKSSSLYESDGVEIDNLCDMQSILNVPFLDPEMTKILDNATPGYDWTLFVQQRFTCIEKVAQMIMWATNPSRKARYDGAHLVAKLLLLKTTSQENLPDYNMEDMIWKLVFHFSKLSERELSNIVELPSLYELLNIFIGYGIIKVPTYIRKLISSGIMYISDSKDKFFHCELLINLKISPLMKNQYNMMLKNIMEYDATYYVRYNYEQLQIQLNTAKEQMLQEQFEHISCLPISVKIWVSEWYLSYVCSPVDNVLKPVDKGTVIKNFTIFGLYLKEIFHFYKWVEFIVYHQLLADINALSALIDVLLYYENLFPLLINDQILFMKTLIHIYSKGLKNKDNLSYNITEFNPFWKFFMKHFPYLVEIDSDLQLQLGEVYESEKIRIEKLTKSSVDVITLYCNINQVNEESFKFGTHNFPGIFQQNLKILLKTESADACERARKGLSLLMLANLGDYTKFMSIFLKRKDYTIEQLVKLISVKLLTLDQIQKIIGDDILREILSRNNYGEGLWYELHKRNFIKKNFKIVLSMYRNSTSLDDRKLFLDLLVFYGPNSRLQEQVTTIICNCLRESNEDYSLILSLLRYGTKNIDQGTQETINIAKLYENLNFTNLWIFQAFTNYYTEALFNGATSDGQTITNFVFELIDLTRYNVLCSHLFDRVANFDVLEKLLEVFEADFFKKCLSEDPDDVHFLAVMIETIMNLSRKMNQSSAVISMNNESFRLLQATMLKFTSMNKTALCNSEMKLSIYLKIFIVHQKFIFQKVCDSLRQDRYDAEADLVKSLRLLFENTGFKLKLRLLLYDILSSLKSFVIYECTKKSESKRETRKLQISEALQNLPPFHISSFLDDMSISAHGDFDFLGLTEQPTPAEPEEGSQFFLYNKRTREYECGLNIEPFQLLPNHQSREPGSSCHFFNDTALSLSLFDARFDKKNPT.

The stretch at 629-654 (VRYNYEQLQIQLNTAKEQMLQEQFEH) forms a coiled coil.

Belongs to the Mediator complex subunit 12 family. As to quaternary structure, component of the SRB8-11 complex, which itself associates with the Mediator complex.

It is found in the nucleus. Its function is as follows. Component of the SRB8-11 complex. The SRB8-11 complex is a regulatory module of the Mediator complex which is itself involved in regulation of basal and activated RNA polymerase II-dependent transcription. The SRB8-11 complex may be involved in the transcriptional repression of a subset of genes regulated by Mediator. It may inhibit the association of the Mediator complex with RNA polymerase II to form the holoenzyme complex. The protein is Mediator of RNA polymerase II transcription subunit 12 (SRB8) of Eremothecium gossypii (strain ATCC 10895 / CBS 109.51 / FGSC 9923 / NRRL Y-1056) (Yeast).